The following is an 81-amino-acid chain: RNA-binding protein Hfq (81 aa).

Residues Asp10–Val69 form the Sm domain.

The protein belongs to the Hfq family. In terms of assembly, homohexamer.

Functionally, RNA chaperone that binds small regulatory RNA (sRNAs) and mRNAs to facilitate mRNA translational regulation in response to envelope stress, environmental stress and changes in metabolite concentrations. Also binds with high specificity to tRNAs. The sequence is that of RNA-binding protein Hfq from Methylobacillus flagellatus (strain ATCC 51484 / DSM 6875 / VKM B-1610 / KT).